The chain runs to 95 residues: Aspartyl/glutamyl-tRNA(Asn/Gln) amidotransferase subunit C (95 aa).

This sequence belongs to the GatC family. In terms of assembly, heterotrimer of A, B and C subunits.

The enzyme catalyses L-glutamyl-tRNA(Gln) + L-glutamine + ATP + H2O = L-glutaminyl-tRNA(Gln) + L-glutamate + ADP + phosphate + H(+). The catalysed reaction is L-aspartyl-tRNA(Asn) + L-glutamine + ATP + H2O = L-asparaginyl-tRNA(Asn) + L-glutamate + ADP + phosphate + 2 H(+). Allows the formation of correctly charged Asn-tRNA(Asn) or Gln-tRNA(Gln) through the transamidation of misacylated Asp-tRNA(Asn) or Glu-tRNA(Gln) in organisms which lack either or both of asparaginyl-tRNA or glutaminyl-tRNA synthetases. The reaction takes place in the presence of glutamine and ATP through an activated phospho-Asp-tRNA(Asn) or phospho-Glu-tRNA(Gln). The sequence is that of Aspartyl/glutamyl-tRNA(Asn/Gln) amidotransferase subunit C from Rhodopseudomonas palustris (strain ATCC BAA-98 / CGA009).